The chain runs to 118 residues: Small ribosomal subunit protein uS13 (118 aa).

The segment at 94–118 is disordered; it reads SLPLRGQRTKTNARTRKGPRKPIRK.

This sequence belongs to the universal ribosomal protein uS13 family. As to quaternary structure, part of the 30S ribosomal subunit. Forms a loose heterodimer with protein S19. Forms two bridges to the 50S subunit in the 70S ribosome.

In terms of biological role, located at the top of the head of the 30S subunit, it contacts several helices of the 16S rRNA. In the 70S ribosome it contacts the 23S rRNA (bridge B1a) and protein L5 of the 50S subunit (bridge B1b), connecting the 2 subunits; these bridges are implicated in subunit movement. Contacts the tRNAs in the A and P-sites. The polypeptide is Small ribosomal subunit protein uS13 (Shewanella woodyi (strain ATCC 51908 / MS32)).